The following is a 114-amino-acid chain: Phosphoribosyl-AMP cyclohydrolase (114 aa).

Position 80 (Asp-80) interacts with Mg(2+). Cys-81 provides a ligand contact to Zn(2+). Mg(2+) is bound by residues Asp-82 and Asp-84. Zn(2+) contacts are provided by Cys-97 and Cys-104.

It belongs to the PRA-CH family. In terms of assembly, homodimer. It depends on Mg(2+) as a cofactor. Zn(2+) serves as cofactor.

Its subcellular location is the cytoplasm. It catalyses the reaction 1-(5-phospho-beta-D-ribosyl)-5'-AMP + H2O = 1-(5-phospho-beta-D-ribosyl)-5-[(5-phospho-beta-D-ribosylamino)methylideneamino]imidazole-4-carboxamide. It participates in amino-acid biosynthesis; L-histidine biosynthesis; L-histidine from 5-phospho-alpha-D-ribose 1-diphosphate: step 3/9. Catalyzes the hydrolysis of the adenine ring of phosphoribosyl-AMP. In Rhodococcus jostii (strain RHA1), this protein is Phosphoribosyl-AMP cyclohydrolase.